The primary structure comprises 92 residues: Large ribosomal subunit protein bL34m (92 aa).

Residues 1–46 constitute a mitochondrion transit peptide; that stretch reads MALLAGSLLGPTSRSAALLGGRWLQPRAWLGFPDAWGLPTPQQARG. The span at 40–57 shows a compositional bias: polar residues; the sequence is TPQQARGKSRGNEYQPSN. The segment at 40-63 is disordered; it reads TPQQARGKSRGNEYQPSNIKRKNK. Ser71 bears the Phosphoserine mark.

This sequence belongs to the bacterial ribosomal protein bL34 family. In terms of assembly, component of the mitochondrial ribosome large subunit (39S) which comprises a 16S rRNA and about 50 distinct proteins.

Its subcellular location is the mitochondrion. In Macaca fascicularis (Crab-eating macaque), this protein is Large ribosomal subunit protein bL34m (MRPL34).